A 310-amino-acid polypeptide reads, in one-letter code: D-erythrulose 1-phosphate 3-epimerase (310 aa).

The catalysed reaction is D-erythrulose 1-phosphate = L-erythrulose 1-phosphate. It participates in carbohydrate metabolism; erythritol degradation. Functionally, catalyzes the racemization of D-erythrulose 1-phosphate to L-erythrulose 1-phosphate. This chain is D-erythrulose 1-phosphate 3-epimerase, found in Brucella abortus (strain 2308).